We begin with the raw amino-acid sequence, 377 residues long: 5-hydroxytryptamine receptor 1D (377 aa).

N-linked (GlcNAc...) asparagine glycans are attached at residues Asn5, Asn17, and Asn21. 3 consecutive transmembrane segments (helical) span residues 39–64, 76–97, and 110–134; these read ISLA…TTIF, LIGS…ISIA, and LCDI…VIAL. Cysteines 111 and 188 form a disulfide. Serotonin is bound by residues Asp118 and Cys122. Residues 135–137 carry the DRY motif; important for ligand-induced conformation changes motif; that stretch reads DRY. Transmembrane regions (helical) follow at residues 155-176, 195-218, 301-326, and 336-359; these read AAVM…PLFW, ISYT…ILYG, KTLG…VLPI, and ALFD…YTVF. Residue Ser321 coordinates serotonin. The NPxxY motif; important for ligand-induced conformation changes and signaling motif lies at 352–356; the sequence is NPIIY.

The protein belongs to the G-protein coupled receptor 1 family. Homodimer. Heterodimer with HTR1B.

The protein resides in the cell membrane. G-protein coupled receptor for 5-hydroxytryptamine (serotonin). Also functions as a receptor for ergot alkaloid derivatives, various anxiolytic and antidepressant drugs and other psychoactive substances. Ligand binding causes a conformation change that triggers signaling via guanine nucleotide-binding proteins (G proteins) and modulates the activity of downstream effectors, such as adenylate cyclase. HTR1D is coupled to G(i)/G(o) G alpha proteins and mediates inhibitory neurotransmission by inhibiting adenylate cyclase activity. Regulates the release of 5-hydroxytryptamine in the brain, and thereby affects neural activity. May also play a role in regulating the release of other neurotransmitters. May play a role in vasoconstriction. The sequence is that of 5-hydroxytryptamine receptor 1D (HTR1D) from Canis lupus familiaris (Dog).